The primary structure comprises 690 residues: Protein-glutamine gamma-glutamyltransferase 2 (690 aa).

An N-acetylalanine modification is found at A2. 2 cysteine pairs are disulfide-bonded: C230/C370 and C370/C371. Active-site residues include C277, H335, and D358. 5 residues coordinate Ca(2+): N398, D400, E436, E446, and E451. K467 carries the post-translational modification N6-acetyllysine. GTP is bound at residue 479-486 (RIRVGQNM). E542 contributes to the Ca(2+) binding site. A GTP-binding site is contributed by 583-586 (RDIY). Q636 is covalently cross-linked (Isoglutamyl lysine isopeptide (Gln-Lys) (interchain with K-?)).

This sequence belongs to the transglutaminase superfamily. Transglutaminase family. In terms of assembly, monomer. Interacts with phospholipase C; promoting alpha-1 adrenergic receptor signaling. Interacts with PLCD1. The cofactor is Ca(2+). In terms of processing, disulfide bond formation inactivates the calcium-dependent acyltransferase activity. Cys-370 can form disulfide bonds with both Cys-230 and Cys-371: formation of a disulfide bond between Cys-230 and Cys-370 facilitates formation of the disulfide between Cys-370 and Cys-371, which promotes inactivation of the acyltransferase activity. May also form interchain disulfids between Cys-230 and Cys-370. Ca(2+) protects against disulfide bond formation and inactivation. Auto-transglutaminated: Forms covalent cross-links mediated by transglutaminase between Gln-636 and the epsilon-amino group of a lysine residue of itself or HMGB1, forming homopolymers and heteropolymers, respectively. Post-translationally, S-nitrosylated, leading to inactivation of the acyltransferase activity.

The protein resides in the cytoplasm. It localises to the cytosol. The protein localises to the nucleus. Its subcellular location is the chromosome. It is found in the secreted. The protein resides in the extracellular space. It localises to the extracellular matrix. The protein localises to the cell membrane. Its subcellular location is the mitochondrion. The enzyme catalyses L-glutaminyl-[protein] + L-lysyl-[protein] = [protein]-L-lysyl-N(6)-5-L-glutamyl-[protein] + NH4(+). It catalyses the reaction L-glutaminyl-[protein] + serotonin = 5-serotonyl-L-glutamyl-[protein] + NH4(+). The catalysed reaction is L-glutaminyl-[protein] + dopamine = 5-dopaminyl-L-glutamyl-[protein] + NH4(+). It carries out the reaction L-glutaminyl-[protein] + histamine = 5-histaminyl-L-glutamyl-[protein] + NH4(+). The enzyme catalyses L-glutaminyl-[protein] + (R)-noradrenaline = 5-(R)-noradrenalinyl-L-glutamyl-[protein] + NH4(+). It catalyses the reaction L-glutaminyl-[protein] + H2O = L-glutamyl-[protein] + NH4(+). With respect to regulation, acyltransferase activity is regulated by the binding of GTP and Ca(2+): inactivated by GTP, which stabilizes its closed structure, thereby obstructing the accessibility of substrates to the active sites. In contrast, Ca(2+) acts as a cofactor by inducing conformational change to the active open form. In absence of Ca(2+), Mg(2+) may bind Ca(2+)-binding sites, promoting GTP-binding and subsequent inhibition of the acyltransferase activity. Extracellularly reduced and activated by CLIC3. Its function is as follows. Calcium-dependent acyltransferase that catalyzes the formation of covalent bonds between peptide-bound glutamine and various primary amines, such as gamma-amino group of peptide-bound lysine, or mono- and polyamines, thereby producing cross-linked or aminated proteins, respectively. Involved in many biological processes, such as bone development, angiogenesis, wound healing, cellular differentiation, chromatin modification and apoptosis. Acts as a protein-glutamine gamma-glutamyltransferase by mediating the cross-linking of proteins, such as ACO2, HSPB6, FN1, HMGB1, RAP1GDS1, SLC25A4/ANT1, SPP1 and WDR54. Under physiological conditions, the protein cross-linking activity is inhibited by GTP; inhibition is relieved by Ca(2+) in response to various stresses. When secreted, catalyzes cross-linking of proteins of the extracellular matrix, such as FN1 and SPP1 resulting in the formation of scaffolds. Plays a key role during apoptosis, both by (1) promoting the cross-linking of cytoskeletal proteins resulting in condensation of the cytoplasm, and by (2) mediating cross-linking proteins of the extracellular matrix, resulting in the irreversible formation of scaffolds that stabilize the integrity of the dying cells before their clearance by phagocytosis, thereby preventing the leakage of harmful intracellular components. In addition to protein cross-linking, can use different monoamine substrates to catalyze a vast array of protein post-translational modifications: mediates aminylation of serotonin, dopamine, noradrenaline or histamine into glutamine residues of target proteins to generate protein serotonylation, dopaminylation, noradrenalinylation or histaminylation, respectively. Mediates protein serotonylation of small GTPases during activation and aggregation of platelets, leading to constitutive activation of these GTPases. Plays a key role in chromatin organization by mediating serotonylation and dopaminylation of histone H3. Catalyzes serotonylation of 'Gln-5' of histone H3 (H3Q5ser) during serotonergic neuron differentiation, thereby facilitating transcription. Acts as a mediator of neurotransmission-independent role of nuclear dopamine in ventral tegmental area (VTA) neurons: catalyzes dopaminylation of 'Gln-5' of histone H3 (H3Q5dop), thereby regulating relapse-related transcriptional plasticity in the reward system. Regulates vein remodeling by mediating serotonylation and subsequent inactivation of ATP2A2/SERCA2. Also acts as a protein deamidase by mediating the side chain deamidation of specific glutamine residues of proteins to glutamate. Catalyzes specific deamidation of protein gliadin, a component of wheat gluten in the diet. May also act as an isopeptidase cleaving the previously formed cross-links. Also able to participate in signaling pathways independently of its acyltransferase activity: acts as a signal transducer in alpha-1 adrenergic receptor-mediated stimulation of phospholipase C-delta (PLCD) activity and is required for coupling alpha-1 adrenergic agonists to the stimulation of phosphoinositide lipid metabolism. The protein is Protein-glutamine gamma-glutamyltransferase 2 of Cavia cutleri (Guinea pig).